The primary structure comprises 290 residues: Acetyl-coenzyme A carboxylase carboxyl transferase subunit beta (290 aa).

In terms of domain architecture, CoA carboxyltransferase N-terminal spans 27 to 290 (LWIKCPSCEA…LTRQPADAVA (264 aa)). Cysteine 31, cysteine 34, cysteine 50, and cysteine 53 together coordinate Zn(2+). The C4-type zinc-finger motif lies at 31–53 (CPSCEAVLYRNDVEANLHVCPKC).

It belongs to the AccD/PCCB family. Acetyl-CoA carboxylase is a heterohexamer composed of biotin carboxyl carrier protein (AccB), biotin carboxylase (AccC) and two subunits each of ACCase subunit alpha (AccA) and ACCase subunit beta (AccD). Zn(2+) is required as a cofactor.

It localises to the cytoplasm. It carries out the reaction N(6)-carboxybiotinyl-L-lysyl-[protein] + acetyl-CoA = N(6)-biotinyl-L-lysyl-[protein] + malonyl-CoA. It functions in the pathway lipid metabolism; malonyl-CoA biosynthesis; malonyl-CoA from acetyl-CoA: step 1/1. In terms of biological role, component of the acetyl coenzyme A carboxylase (ACC) complex. Biotin carboxylase (BC) catalyzes the carboxylation of biotin on its carrier protein (BCCP) and then the CO(2) group is transferred by the transcarboxylase to acetyl-CoA to form malonyl-CoA. The polypeptide is Acetyl-coenzyme A carboxylase carboxyl transferase subunit beta (Paraburkholderia phymatum (strain DSM 17167 / CIP 108236 / LMG 21445 / STM815) (Burkholderia phymatum)).